We begin with the raw amino-acid sequence, 392 residues long: F-box only protein 5-A (392 aa).

Residues 1–21 (MMCGFASNQSPKKLSSKKSSA) are disordered. Low complexity predominate over residues 7 to 20 (SNQSPKKLSSKKSS). Positions 197–244 (AELFHRDFKHLLTKILRHLSAMDLINVISVSTTWRKLLQKDNWAYNAY) constitute an F-box domain. Residues 319-367 (SLKVCVDCGSPAKHDPCLHRAICTRESCKLDFCTRCSCKYHFSKSCLMS) form a ZBR-type zinc finger. C323, C326, C341, C346, C351, C354, H359, and C364 together coordinate Zn(2+).

As to quaternary structure, part of a SCF (SKP1-cullin-F-box) protein ligase complex. Interacts with btrc. Interacts with skp1. Interacts with cdc20. Interacts with pin1; stabilizes fbxo5 by preventing its association with btrc in an isomerization-dependent pathway; this interaction is present during G2 phase and prevents fbxo5 degradation. Interacts with plk1. Proteolysed; proteolysis is induced by both cyclin B-cdk1 and cyclin A-cdk1/2 complex through probable phosphorylation. Proteolysis is inhibited by pin1 during G2.

It is found in the nucleus. Its subcellular location is the cytoplasm. The protein localises to the cytoskeleton. The protein resides in the spindle. It localises to the microtubule organizing center. It is found in the centrosome. It functions in the pathway protein modification; protein ubiquitination. In terms of biological role, regulates progression through early mitosis by inhibiting the anaphase promoting complex/cyclosome (APC). Binds to the APC activator cdc20 to prevent APC activation. Can also bind directly to the APC to inhibit substrate-binding. Required to arrest unfertilized eggs at metaphase of meiosis II, by preventing their release from metaphase of meiosis II, through inhibition of APC-dependent cyclin B destruction leading to stabilization of cyclin B-cdk1 complex activity. The protein is F-box only protein 5-A (fbxo5-a) of Xenopus laevis (African clawed frog).